We begin with the raw amino-acid sequence, 208 residues long: Protein-L-isoaspartate O-methyltransferase (208 aa).

Ser59 is a catalytic residue.

The protein belongs to the methyltransferase superfamily. L-isoaspartyl/D-aspartyl protein methyltransferase family.

Its subcellular location is the cytoplasm. The enzyme catalyses [protein]-L-isoaspartate + S-adenosyl-L-methionine = [protein]-L-isoaspartate alpha-methyl ester + S-adenosyl-L-homocysteine. Functionally, catalyzes the methyl esterification of L-isoaspartyl residues in peptides and proteins that result from spontaneous decomposition of normal L-aspartyl and L-asparaginyl residues. It plays a role in the repair and/or degradation of damaged proteins. This is Protein-L-isoaspartate O-methyltransferase from Yersinia enterocolitica serotype O:8 / biotype 1B (strain NCTC 13174 / 8081).